A 2474-amino-acid chain; its full sequence is MDPVYVDIDADSAFLKALQRAYPMFEVEPRQVTPNDHANARAFSHLAIKLIEQEIDPDSTILDIGSAPARRMMSDRKYHCVCPMRSAEDPERLANYARKLASAAGKVLDRNISEKIGDLQAVMAVPDAETPTFCLHTDVSCRQRADVAIYQDVYAVHAPTSLYHQAIKGVRVAYWIGFDTTPFMYNAMAGAYPSYSTNWADEQVLKAKNIGLCSTDLTEGRRGKLSIMRGKKMKPCDRVLFSVGSTLYPESRKLLKSWHLPSVFHLKGKLSFTCRCDTVVSCEGYVVKRITISPGLYGKTTGYAVTHHADGFLMCKTTDTVDGERVSFSVCTYVPATICDQMTGILATEVTPEDAQKLLVGLNQRIVVNGRTQRNTNTMKNYLLPVVAQAFSKWAKECRKDMEDEKLLGIRERTLTCCCLWAFKKQKTHTVYKRPDTQSIQKVPAEFDSFVVPSLWSSGLSIPLRTRIKWLLSKVPKTDLIPYSGDAKEARDAEKEAEEEREAELTREALPPLQAAQDDVQVEIDVEQLEDRAGAGIIETPRGAIKVTAQPTDHVVGEYLVLSPQTVLRSQKLSLIHALAEQVKTCTHSGRAGRYAVEAYDGRILVPSGYAISPEDFQSLSESATMVYNEREFVNRKLHHIALHGPALNTDEESYELVRAERTEHEYVYDVDQRRCCKKEEAAGLVLVGDLTNPPYHEFAYEGLRIRPACPYKTAVIGVFGVPGSGKSAIIKNLVTRQDLVTSGKKENCQEISTDVMRQRNLEISARTVDSLLLNGCNRPVDVLYVDEAFACHSGTLLALIALVRPRQKVVLCGDPKQCGFFNMMQMKVNYNHNICTQVYHKSISRRCTLPVTAIVSSLHYEGKMRTTNEYNKPIVVDTTGSTKPDPGDLVLTCFRGWVKQLQIDYRGHEVMTAAASQGLTRKGVYAVRQKVNENPLYASTSEHVNVLLTRTEGKLVWKTLSGDPWIKTLQNPPKGNFKATIKEWEVEHASIMAGICNHQVTFDTFQNKANVCWAKSLVPILETAGIKLNDRQWSQIIQAFKEDRAYSPEVALNEICTRMYGVDLDSGLFSKPLVSVHYADNHWDNRPGGKMFGFNPEAASILERKYPFTKGKWNTNKQICVTTRRIEDFNPNTNIIPANRRLPHSLVAEHRPVKGERMEWLVNKINGHHVLLVSGYNLVLPTKRVTWVAPLGIRGADYTYNLELGLPATLGRYDLVIINIHTPFRIHHYQQCVDHAMKLQMLGGDSLRLLKPGGSLLIRAYGYADRTSERVVCVLGRKFRSSRALKPPCVTSNTEMFFLFSNFDNGRRNFTTHVMNNQLNAAFVGQATRAGCAPSYRVKRMDIAKNDEECVVNAANPRGLPGDGVCKAVYKKWPESFKNSATPVGTAKTVMCGTYPVIHAVGPNFSNYSESEGDRELAAAYREVAKEVTRLGVNSVAIPLLSTGVYSGGKDRLTQSLNHLFTALDSTDADVVIYCRDKEWEKKIAEAIQMRTQVELLDEHISVDCDIIRVHPDSSLAGRKGYSTTEGSLYSYLEGTRFHQTAVDMAEVYTMWPKQTEANEQVCLYALGESIESIRQKCPVDDADASSPPKTVPCLCRYAMTPERVTRLRMNHVTSIIVCSSFPLPKYKIEGVQKVKCSKVMLFDHNVPSRVSPREYKSPQETAQEVSSTTSLTHSQFDLSVDGEELPAPSDLEADAPIPEPTPDDRAVLTLPPTIDNFSAVSDWVMNTAPVAPPRRRRGKNLNVTCDEREGNVLPMASVRFFRADLHSIVQETAEIRDTAASLQAPLSVATEPNQLPISFGAPNETFPITFGDFDEGEIESLSSELLTFGDFSPGEVDDLTDSDWSTCSDTDDELXLDRAGGYIFSSDTGPGHLQQRSVRQTVLPVNTLEEVQEEKCYPPKLDEVKEQLLLKKLQESASMANRSRYQSRKVENMKATIVQRLKGGCKLYLMSETPKVPTYRTTYPAPVYSPPINIRLSNPESAVAACNEFLARNYPTVASYQITDEYDAYLDMVDGSESCLDRATFNPSKLRSYPKQHSYHAPTIRSAVPSPFQNTLQNVLAAATKRNCNVTQMRELPTLDSAVFNVECFKKFACNQEYWKEFAASPIRITTENLTTYVTKLKGPKAAALFAKTHNLLPLQEVPMDRFTVDMKRDVKVTPGTKHTEERPKVQVIQAAEPLATAYLCGIHRELVRRLNAVLLPNVHTLFDMSAEDFDAIIAAHFKPGDAVLETDIASFDKSQDDSLALTALMLLEDLGVDHPLLDLIEAAFGEISSCHLPTGTRFKFGAMMKSGMFLTLFVNTLLNITIASRVLEDRLTRSACAAFIGDDNIIHGVVSDELMAARCATWMNMEVKIIDAVVSQKAPYFCGGFILYDTVAGTACRVADPLKRLFKLGKPLAAGDEQDDDRRRALADEVVRWQRTGLTDELEKAVHSRYEVQGISVVVMSMATFASSRSNFEKLRGPVVTLYGGPK.

An Alphavirus-like MT domain is found at E28 to H259. Residue H37 is the For mRNA-capping enzyme nsP1 activity of the active site. Positions 79, 129, 134, and 141 each coordinate Zn(2+). Positions G295–F450 are membrane-binding and oligomerization. 2 S-palmitoyl cysteine; by host lipidation sites follow: C417 and C419. Residues D690–K842 form the (+)RNA virus helicase ATP-binding domain. G721–S728 is a binding site for a ribonucleoside 5'-triphosphate. The (+)RNA virus helicase C-terminal domain maps to S843–S991. The Peptidase C9 domain maps to D1004–Q1327. The nucleolus localization signal stretch occupies residues T1005–T1024. The For cysteine protease nsP2 activity role is filled by C1013. The Nuclear export signal motif lies at T1058–S1067. H1083 acts as the For cysteine protease nsP2 activity in catalysis. The Nuclear localization signal signature appears at P1182 to V1186. The region spanning A1334–T1493 is the Macro domain. ADP-D-ribose is bound by residues D1343, N1357, G1365, G1445, V1446, and Y1447. Positions 1595, 1597, 1620, and 1638 each coordinate Zn(2+). Residues R1651–D1706 form a disordered region. Residues S1659–X1857 are HVD. Residues P1660 to D1679 are compositionally biased toward polar residues. Interaction with host CD2AP regions lie at residues V1726 to R1739 and P1756 to L1767. An interaction with host FHL1 region spans residues V1745–E1793. The FGDF; binding to host G3BP1 motif lies at F1812–F1815. The interaction with host CD2AP stretch occupies residues I1820–L1828. The FGDF; binding to host G3BP1 signature appears at F1830–F1833. The RdRp catalytic domain occupies D2228–A2343.

As to quaternary structure, homododecamer. The enzyme forms a membrane-associated dodecameric ring with a central channel for the exchange of between the viral replication factories and the host cytoplasm. Interacts with non-structural protein 3. Interacts with RNA-directed RNA polymerase nsP4. Interacts with protease nsP2. Interacts with itself. Interacts with host STING1; this interaction results in inhibition of cGAS-STING signaling and increased levels of palmitoylation and protein stabilization of nsP1. Interacts with host TMEM45B; this interaction leads to viral replication inhibition. Interacts with mRNA-capping enzyme nsP1. Interacts (via C-terminus) with host G3BP1; this interaction inhibits the formation of host stress granules on viral mRNAs and the nsp3-G3BP1 complexes bind viral RNAs and probably orchestrate the assembly of viral replication complexes. Interacts (via C-terminus) with host G3BP2; this interaction inhibits the formation of host stress granules on viral mRNAs and the nsp3-G3BP2 complexes bind viral RNAs and probably orchestrate the assembly of viral replication complexes. Interacts (via C-terminus) with host NAP1L1. Interacts (via C-terminus) with host NAP1L4. Interacts (via C-terminus) with host DHX9; this interaction allows the recruitment of DHX9 to the plasma membrane, where it associates with viral replication complexes and may play a role in the translation-to-replication switch. Interacts (via C-terminus) with host FHL1 (via LIM domain 1); this interaction is required for viral RNA replication. Interacts (via C-terminus) with host CD2AP; this interaction plays a role in initiation of viral replication. Interacts (via C-terminus) with host SH3KBP1; this interaction plays a role in initiation of viral replication. In terms of assembly, interacts with mRNA-capping enzyme nsP1. Interacts with protease nsP2. interacts with itself. Interacts with host TMEM45B; this interaction leads to viral replication inhibition. As to quaternary structure, interacts with RNA-directed RNA polymerase nsP4. Interacts with mRNA-capping enzyme nsP1. Interacts with KPNA1/karyopherin-alpha1; this interaction probably allows the active transport of protease nsP2 into the host nucleus. Mg(2+) is required as a cofactor. Mn(2+) serves as cofactor. Post-translationally, specific enzymatic cleavages in vivo yield mature proteins. The processing of the polyprotein is temporally regulated. In early stages (1.7 hpi), P1234 is first cleaved in trans through its nsP2 protease activity, releasing P123' and nsP4, which associate to form the early replication complex. At the same time, P1234 is also cut at the nsP1/nsP2 site early in infection but with lower efficiency. After replication of the viral minus-strand RNAs (4 hpi), the polyproteins are cut at the nsP1/nsP2 and nsP2/nsP3 sites very efficiently, preventing accumulation of P123' and P1234 and allowing the formation of the late replication complex. NsP3'/nsP4 site is not cleaved anymore and P34 is produced rather than nsP4. Specific enzymatic cleavages in vivo yield mature proteins. The processing of the polyprotein is temporally regulated. In early stages (1.7 hpi), P123 is cleaved at the nsP1/nsP2 site with low efficiency. After replication of the viral minus-strand RNAs (4 hpi), the polyproteins are cut at the nsP1/nsP2 and nsP2/nsP3 sites very efficiently, preventing accumulation of P123 and allowing the formation of the late replication complex. In terms of processing, specific enzymatic cleavages in vivo yield mature proteins. The processing of the polyprotein is temporally regulated. In early stages (1.7 hpi), P123' is cleaved at the nsP1/nsP2 site with low efficiency. After replication of the viral minus-strand RNAs (4 hpi), the polyproteins are cut at the nsP1/nsP2 and nsP2/nsP3 sites very efficiently, preventing accumulation of P123' and allowing the formation of the late replication complex. Post-translationally, palmitoylated by host palmitoyltransferases ZDHHC2 and ZDHHC19. Palmitoylation is increased by the interacton with host STING1. Phosphorylated by host on serines and threonines. In terms of processing, ubiquitinated; targets the protein for rapid degradation via the ubiquitin system. Nsp4 is present in extremely low quantities due to low frequency of translation through the amber stop-codon and the degradation by the ubiquitin pathway.

Its subcellular location is the host cytoplasmic vesicle membrane. It localises to the host cell membrane. It is found in the host cell projection. The protein resides in the host filopodium. The protein localises to the host nucleus. Its subcellular location is the host cytoplasm. It carries out the reaction GTP + S-adenosyl-L-methionine = N(7)-methyl-GTP + S-adenosyl-L-homocysteine. The enzyme catalyses N(7)-methyl-GTP + L-histidyl-[protein] = N(tele)-(N(7)-methylguanosine 5'-phospho)-L-histidyl-[protein] + diphosphate. The catalysed reaction is N(tele)-(N(7)-methylguanosine 5'-phospho)-L-histidyl-[protein] + a 5'-end diphospho-(purine-ribonucleoside) in mRNA + H(+) = a 5'-end (N(7)-methyl 5'-triphosphoguanosine)-(purine-ribonucleoside) in mRNA + L-histidyl-[protein]. It catalyses the reaction a 5'-end triphospho-ribonucleoside in mRNA + H2O = a 5'-end diphospho-ribonucleoside in mRNA + phosphate + H(+). It carries out the reaction a ribonucleoside 5'-triphosphate + H2O = a ribonucleoside 5'-diphosphate + phosphate + H(+). The enzyme catalyses ATP + H2O = ADP + phosphate + H(+). The catalysed reaction is RNA(n) + a ribonucleoside 5'-triphosphate = RNA(n+1) + diphosphate. It catalyses the reaction 4-O-(ADP-D-ribosyl)-L-aspartyl-[protein] + H2O = L-aspartyl-[protein] + ADP-D-ribose + H(+). It carries out the reaction 5-O-(ADP-D-ribosyl)-L-glutamyl-[protein] + H2O = L-glutamyl-[protein] + ADP-D-ribose + H(+). The enzyme catalyses RNA(n) + ATP = RNA(n)-3'-adenine ribonucleotide + diphosphate. The catalysed reaction is ADP-alpha-D-ribose 1''-phosphate + H2O = ADP-D-ribose + phosphate. Its function is as follows. Inactive precursor of the viral replicase, which is activated by cleavages carried out by the viral protease nsP2. In terms of biological role, the early replication complex formed by the polyprotein P123 and nsP4 synthesizes minus-strand RNAs. As soon P123 is cleaved into mature proteins, the plus-strand RNAs synthesis begins. The early replication complex formed by the polyprotein P123' and nsP4 synthesizes minus-strand RNAs. Polyprotein P123' is a short-lived polyprotein that accumulates during early stage of infection. As soon P123' is cleaved into mature proteins, the plus-strand RNAs synthesis begins. Functionally, cytoplasmic capping enzyme that catalyzes two virus-specific reactions: methyltransferase and guanylyltransferase. mRNA-capping is necessary since all viral RNAs are synthesized in the cytoplasm, and host capping enzymes are restricted to the nucleus. The enzymatic reaction involves a covalent link between 7-methyl-GMP and nsP1, whereas eukaryotic capping enzymes form a covalent complex only with GMP. nsP1 capping consists in the following reactions: GTP is first methylated into 7-methyl-GMP and then is covalently linked to nsP1 to form the m7GMp-nsP1 complex from which 7-methyl-GMP complex is transferred to the mRNA to create the cap structure. NsP1 is also needed for the initiation of the minus-strand RNAs synthesis. At the initiation of virus replication, mediates the assembly of the viral replication complex made of the non-structural proteins, the association of this complex with the inner face of the plasma membrane and the formation of membranous spherules that serve as replication complex factories. Forms the neck of these spherules with a central channel for mediating communication and the passage of RNA, nucleotides, and small proteins between the viral replication complex and the host cytoplasm. Palmitoylated nsP1 is remodeling host cell cytoskeleton, and induces filopodium-like structure formation at the surface of the host cell. Its function is as follows. Multifunctional protein whose N-terminus is part of the RNA polymerase complex and displays NTPase, RNA triphosphatase and helicase activities. NTPase and RNA triphosphatase are involved in viral RNA capping and helicase keeps a check on the dsRNA replication intermediates. The C-terminus harbors a protease that specifically cleaves the polyproteins and releases the mature proteins. Required for the shutoff of minus-strand RNAs synthesis. Specifically inhibits the host IFN response by promoting the nuclear export of host STAT1. Also inhibits host transcription by inducing the rapid proteasome-dependent degradation of POLR2A, a catalytic subunit of the RNAPII complex. The resulting inhibition of cellular protein synthesis serves to ensure maximal viral gene expression and to evade host immune response. In terms of biological role, seems to be essential for minus-strand RNAs and subgenomic 26S mRNAs synthesis. Displays mono-ADP-ribosylhydrolase activity. ADP-ribosylation is a post-translational modification that controls various processes of the host cell and the virus probably needs to revert it for optimal viral replication. Binds proteins of FXR family and sequesters them into the viral RNA replication complexes thereby inhibiting the formation of host stress granules on viral mRNAs. The nsp3'-FXR complexes bind viral RNAs and probably orchestrate the assembly of viral replication complexes, thanks to the ability of FXR family members to self-assemble and bind DNA. Seems to be essential for minus-strand RNAs and subgenomic 26S mRNAs synthesis. Displays mono-ADP-ribosylhydrolase activity. ADP-ribosylation is a post-translational modification that controls various processes of the host cell and the virus probably needs to revert it for optimal viral replication. Binds proteins of G3BP family and sequesters them into the viral RNA replication complexes thereby inhibiting the formation of host stress granules on viral mRNAs. The nsp3-G3BP complexes bind viral RNAs and probably orchestrate the assembly of viral replication complexes, thanks to the ability of G3BP family members to self-assemble and bind DNA. Functionally, RNA dependent RNA polymerase. Replicates genomic and antigenomic RNA by recognizing replications specific signals. The early replication complex formed by the polyprotein P123 and nsP4 synthesizes minus-strand RNAs. The late replication complex composed of fully processed nsP1-nsP4 is responsible for the production of genomic and subgenomic plus-strand RNAs. The chain is Polyprotein P1234 from Aedes aegypti (Yellowfever mosquito).